A 544-amino-acid chain; its full sequence is Membrane protein insertase YidC (544 aa).

A run of 5 helical transmembrane segments spans residues 6 to 26, 345 to 365, 423 to 443, 460 to 480, and 503 to 523; these read NILLIGLLFVSFLLWQQWQTD, LLMFFQSIVGNWGAAIILITL, GGCLPILLQMPIFIALYWVLL, LSVQDPYYVMPILMGVSMFVM, and VVFTVFFLWFPAGLVLYWLVG.

This sequence belongs to the OXA1/ALB3/YidC family. Type 1 subfamily. As to quaternary structure, interacts with the Sec translocase complex via SecD. Specifically interacts with transmembrane segments of nascent integral membrane proteins during membrane integration.

It localises to the cell inner membrane. In terms of biological role, required for the insertion and/or proper folding and/or complex formation of integral membrane proteins into the membrane. Involved in integration of membrane proteins that insert both dependently and independently of the Sec translocase complex, as well as at least some lipoproteins. Aids folding of multispanning membrane proteins. The sequence is that of Membrane protein insertase YidC from Shewanella woodyi (strain ATCC 51908 / MS32).